Reading from the N-terminus, the 414-residue chain is 2,3-diketo-5-methylthiopentyl-1-phosphate enolase (414 aa).

The active-site Proton acceptor is lysine 99. Substrate contacts are provided by residues lysine 148, 174–177 (KDDE), histidine 265, glycine 338, and 360–361 (GG). The Mg(2+) site is built by lysine 174, aspartate 176, and glutamate 177. N6-carboxylysine is present on lysine 174.

It belongs to the RuBisCO large chain family. Type IV subfamily. As to quaternary structure, homodimer. Mg(2+) serves as cofactor.

The enzyme catalyses 5-methylsulfanyl-2,3-dioxopentyl phosphate = 2-hydroxy-5-methylsulfanyl-3-oxopent-1-enyl phosphate. The protein operates within amino-acid biosynthesis; L-methionine biosynthesis via salvage pathway; L-methionine from S-methyl-5-thio-alpha-D-ribose 1-phosphate: step 3/6. Its function is as follows. Catalyzes the enolization of 2,3-diketo-5-methylthiopentyl-1-phosphate (DK-MTP-1-P) into 2-hydroxy-3-keto-5-methylthiopentenyl-1-phosphate (HK-MTPenyl-1-P). The sequence is that of 2,3-diketo-5-methylthiopentyl-1-phosphate enolase from Bacillus cereus (strain B4264).